Reading from the N-terminus, the 511-residue chain is Phosphoenolpyruvate carboxylase (511 aa).

This sequence belongs to the PEPCase type 2 family. Homotetramer. Mg(2+) is required as a cofactor.

It carries out the reaction oxaloacetate + phosphate = phosphoenolpyruvate + hydrogencarbonate. Catalyzes the irreversible beta-carboxylation of phosphoenolpyruvate (PEP) to form oxaloacetate (OAA), a four-carbon dicarboxylic acid source for the tricarboxylic acid cycle. The protein is Phosphoenolpyruvate carboxylase of Saccharolobus islandicus (strain Y.G.57.14 / Yellowstone #1) (Sulfolobus islandicus).